A 336-amino-acid polypeptide reads, in one-letter code: UbiA prenyltransferase domain-containing protein 1 (336 aa).

N-acetylalanine is present on Ala2. The next 8 helical transmembrane spans lie at 81–101 (LLLG…LVNT), 132–152 (FGVF…YLSA), 158–178 (LALI…GIGF), 186–206 (LVIL…VQVG), 207–227 (SLAI…EAIL), 243–265 (IVTL…LLFV), 275–295 (THCS…FSLE), and 313–333 (LNLL…AGSL).

It belongs to the UbiA prenyltransferase family. As to quaternary structure, interacts with HMGCR and SOAT1.

It localises to the endoplasmic reticulum membrane. Its subcellular location is the golgi apparatus membrane. It is found in the mitochondrion membrane. The catalysed reaction is menadiol + (2E,6E,10E)-geranylgeranyl diphosphate = menaquinol-4 + diphosphate. It catalyses the reaction all-trans-decaprenyl diphosphate + 4-hydroxybenzoate = 4-hydroxy-3-(all-trans-decaprenyl)benzoate + diphosphate. It functions in the pathway quinol/quinone metabolism; menaquinone biosynthesis. The protein operates within cofactor biosynthesis; ubiquinone biosynthesis. Functionally, prenyltransferase that mediates the formation of menaquinone-4 (MK-4) and coenzyme Q10. MK-4 is a vitamin K2 isoform required for endothelial cell development. Mediates the conversion of phylloquinone (PK) into MK-4, probably by cleaving the side chain of phylloquinone (PK) to release 2-methyl-1,4-naphthoquinone (menadione; K3) and then prenylating it with geranylgeranyl pyrophosphate (GGPP) to form MK-4. Also plays a role in cardiovascular development independently of MK-4 biosynthesis, by acting as a coenzyme Q10 biosynthetic enzyme: coenzyme Q10, also named ubiquinone, plays an important antioxidant role in the cardiovascular system. Mediates biosynthesis of coenzyme Q10 in the Golgi membrane, leading to protect cardiovascular tissues from NOS3/eNOS-dependent oxidative stress. This Mus musculus (Mouse) protein is UbiA prenyltransferase domain-containing protein 1 (Ubiad1).